The sequence spans 119 residues: Methylglyoxal synthase (119 aa).

Positions 1–119 (MKIALIAHDK…ESAKLIMADI (119 aa)) constitute an MGS-like domain. Residues H8, K12, 34–37 (TGTT), and 54–55 (SG) contribute to the substrate site. D60 serves as the catalytic Proton donor/acceptor. Substrate is bound at residue H87.

It belongs to the methylglyoxal synthase family.

It catalyses the reaction dihydroxyacetone phosphate = methylglyoxal + phosphate. Its function is as follows. Catalyzes the formation of methylglyoxal from dihydroxyacetone phosphate. The chain is Methylglyoxal synthase from Clostridium perfringens (strain ATCC 13124 / DSM 756 / JCM 1290 / NCIMB 6125 / NCTC 8237 / Type A).